Reading from the N-terminus, the 264-residue chain is Thymidylate synthase (264 aa).

Arg-21 lines the dUMP pocket. His-51 is a binding site for (6R)-5,10-methylene-5,6,7,8-tetrahydrofolate. 126 to 127 (RR) serves as a coordination point for dUMP. Catalysis depends on Cys-146, which acts as the Nucleophile. DUMP contacts are provided by residues 166 to 169 (RSAD), Asn-177, and 207 to 209 (HLY). Asp-169 contributes to the (6R)-5,10-methylene-5,6,7,8-tetrahydrofolate binding site. Ala-263 provides a ligand contact to (6R)-5,10-methylene-5,6,7,8-tetrahydrofolate.

This sequence belongs to the thymidylate synthase family. Bacterial-type ThyA subfamily. As to quaternary structure, homodimer.

The protein localises to the cytoplasm. The catalysed reaction is dUMP + (6R)-5,10-methylene-5,6,7,8-tetrahydrofolate = 7,8-dihydrofolate + dTMP. It participates in pyrimidine metabolism; dTTP biosynthesis. In terms of biological role, catalyzes the reductive methylation of 2'-deoxyuridine-5'-monophosphate (dUMP) to 2'-deoxythymidine-5'-monophosphate (dTMP) while utilizing 5,10-methylenetetrahydrofolate (mTHF) as the methyl donor and reductant in the reaction, yielding dihydrofolate (DHF) as a by-product. This enzymatic reaction provides an intracellular de novo source of dTMP, an essential precursor for DNA biosynthesis. The polypeptide is Thymidylate synthase (Bartonella quintana (strain Toulouse) (Rochalimaea quintana)).